Consider the following 446-residue polypeptide: D-inositol 3-phosphate glycosyltransferase (446 aa).

1D-myo-inositol 3-phosphate is bound at residue H19. Residues 25–26 and G33 contribute to the UDP-N-acetyl-alpha-D-glucosamine site; that span reads QP. Residues 30-35, K88, Y121, T145, and R165 contribute to the 1D-myo-inositol 3-phosphate site; that span reads DAGGMN. UDP-N-acetyl-alpha-D-glucosamine-binding residues include R239, K244, and Q303. 3 residues coordinate Mg(2+): Y312, R313, and S315. Positions 325 and 333 each coordinate UDP-N-acetyl-alpha-D-glucosamine. T339 serves as a coordination point for Mg(2+).

This sequence belongs to the glycosyltransferase group 1 family. MshA subfamily. Homodimer.

The catalysed reaction is 1D-myo-inositol 3-phosphate + UDP-N-acetyl-alpha-D-glucosamine = 1D-myo-inositol 2-acetamido-2-deoxy-alpha-D-glucopyranoside 3-phosphate + UDP + H(+). Catalyzes the transfer of a N-acetyl-glucosamine moiety to 1D-myo-inositol 3-phosphate to produce 1D-myo-inositol 2-acetamido-2-deoxy-glucopyranoside 3-phosphate in the mycothiol biosynthesis pathway. The chain is D-inositol 3-phosphate glycosyltransferase from Rhodococcus opacus (strain B4).